The sequence spans 291 residues: Small ribosomal subunit biogenesis GTPase RsgA (291 aa).

The 159-residue stretch at 63 to 221 (HNELKRPPVS…IADTPGFSAL (159 aa)) folds into the CP-type G domain. GTP contacts are provided by residues 112 to 115 (TKKD) and 164 to 172 (GQSGVGKST). Residues Cys-245, Cys-250, His-252, and Cys-258 each coordinate Zn(2+).

It belongs to the TRAFAC class YlqF/YawG GTPase family. RsgA subfamily. Monomer. Associates with 30S ribosomal subunit, binds 16S rRNA. The cofactor is Zn(2+).

It is found in the cytoplasm. Its function is as follows. One of several proteins that assist in the late maturation steps of the functional core of the 30S ribosomal subunit. Helps release RbfA from mature subunits. May play a role in the assembly of ribosomal proteins into the subunit. Circularly permuted GTPase that catalyzes slow GTP hydrolysis, GTPase activity is stimulated by the 30S ribosomal subunit. This chain is Small ribosomal subunit biogenesis GTPase RsgA, found in Staphylococcus haemolyticus (strain JCSC1435).